A 232-amino-acid chain; its full sequence is Orotate phosphoribosyltransferase (232 aa).

5-phospho-alpha-D-ribose 1-diphosphate contacts are provided by residues R107, K108, K111, H113, and 133 to 141 (EDLTTAGGS). T137 contributes to the orotate binding site.

The protein belongs to the purine/pyrimidine phosphoribosyltransferase family. PyrE subfamily. As to quaternary structure, homodimer. Mg(2+) serves as cofactor.

The catalysed reaction is orotidine 5'-phosphate + diphosphate = orotate + 5-phospho-alpha-D-ribose 1-diphosphate. The protein operates within pyrimidine metabolism; UMP biosynthesis via de novo pathway; UMP from orotate: step 1/2. Its function is as follows. Catalyzes the transfer of a ribosyl phosphate group from 5-phosphoribose 1-diphosphate to orotate, leading to the formation of orotidine monophosphate (OMP). In Sinorhizobium fredii (strain NBRC 101917 / NGR234), this protein is Orotate phosphoribosyltransferase.